Consider the following 314-residue polypeptide: 4-hydroxy-3-methylbut-2-enyl diphosphate reductase (314 aa).

Residue C12 coordinates [4Fe-4S] cluster. (2E)-4-hydroxy-3-methylbut-2-enyl diphosphate contacts are provided by H43 and H81. Residues H43 and H81 each contribute to the dimethylallyl diphosphate site. Residues H43 and H81 each contribute to the isopentenyl diphosphate site. C103 is a [4Fe-4S] cluster binding site. Position 131 (H131) interacts with (2E)-4-hydroxy-3-methylbut-2-enyl diphosphate. H131 is a dimethylallyl diphosphate binding site. Position 131 (H131) interacts with isopentenyl diphosphate. Catalysis depends on E133, which acts as the Proton donor. T170 is a (2E)-4-hydroxy-3-methylbut-2-enyl diphosphate binding site. C198 contributes to the [4Fe-4S] cluster binding site. 3 residues coordinate (2E)-4-hydroxy-3-methylbut-2-enyl diphosphate: S226, N228, and S271. Dimethylallyl diphosphate contacts are provided by S226, N228, and S271. The isopentenyl diphosphate site is built by S226, N228, and S271.

It belongs to the IspH family. The cofactor is [4Fe-4S] cluster.

It catalyses the reaction isopentenyl diphosphate + 2 oxidized [2Fe-2S]-[ferredoxin] + H2O = (2E)-4-hydroxy-3-methylbut-2-enyl diphosphate + 2 reduced [2Fe-2S]-[ferredoxin] + 2 H(+). It carries out the reaction dimethylallyl diphosphate + 2 oxidized [2Fe-2S]-[ferredoxin] + H2O = (2E)-4-hydroxy-3-methylbut-2-enyl diphosphate + 2 reduced [2Fe-2S]-[ferredoxin] + 2 H(+). It functions in the pathway isoprenoid biosynthesis; dimethylallyl diphosphate biosynthesis; dimethylallyl diphosphate from (2E)-4-hydroxy-3-methylbutenyl diphosphate: step 1/1. The protein operates within isoprenoid biosynthesis; isopentenyl diphosphate biosynthesis via DXP pathway; isopentenyl diphosphate from 1-deoxy-D-xylulose 5-phosphate: step 6/6. In terms of biological role, catalyzes the conversion of 1-hydroxy-2-methyl-2-(E)-butenyl 4-diphosphate (HMBPP) into a mixture of isopentenyl diphosphate (IPP) and dimethylallyl diphosphate (DMAPP). Acts in the terminal step of the DOXP/MEP pathway for isoprenoid precursor biosynthesis. The chain is 4-hydroxy-3-methylbut-2-enyl diphosphate reductase from Bacillus subtilis (strain 168).